Reading from the N-terminus, the 411-residue chain is Citrate synthase (411 aa).

Catalysis depends on residues histidine 304 and aspartate 363.

Belongs to the citrate synthase family.

It catalyses the reaction oxaloacetate + acetyl-CoA + H2O = citrate + CoA + H(+). The protein operates within carbohydrate metabolism; tricarboxylic acid cycle; isocitrate from oxaloacetate: step 1/2. This is Citrate synthase (gltA) from Rickettsia canadensis.